Consider the following 115-residue polypeptide: Ribosome-binding factor A (115 aa).

The protein belongs to the RbfA family. Monomer. Binds 30S ribosomal subunits, but not 50S ribosomal subunits or 70S ribosomes.

The protein resides in the cytoplasm. In terms of biological role, one of several proteins that assist in the late maturation steps of the functional core of the 30S ribosomal subunit. Associates with free 30S ribosomal subunits (but not with 30S subunits that are part of 70S ribosomes or polysomes). Required for efficient processing of 16S rRNA. May interact with the 5'-terminal helix region of 16S rRNA. This is Ribosome-binding factor A from Streptococcus gordonii (strain Challis / ATCC 35105 / BCRC 15272 / CH1 / DL1 / V288).